Reading from the N-terminus, the 467-residue chain is Serine/threonine-protein kinase SSN3 (467 aa).

Composition is skewed to polar residues over residues M1–R12 and G29–S39. The tract at residues M1–N45 is disordered. A Protein kinase domain is found at Y79–F408. Residues I85–V93 and K109 each bind ATP. The active-site Proton acceptor is D211. The tract at residues Y426 to M467 is disordered.

Belongs to the protein kinase superfamily. CMGC Ser/Thr protein kinase family. CDC2/CDKX subfamily. As to quaternary structure, component of the SRB8-11 complex, a regulatory module of the Mediator complex. Mg(2+) serves as cofactor.

It is found in the nucleus. It carries out the reaction L-seryl-[protein] + ATP = O-phospho-L-seryl-[protein] + ADP + H(+). The catalysed reaction is L-threonyl-[protein] + ATP = O-phospho-L-threonyl-[protein] + ADP + H(+). It catalyses the reaction [DNA-directed RNA polymerase] + ATP = phospho-[DNA-directed RNA polymerase] + ADP + H(+). Functionally, component of the SRB8-11 complex. The SRB8-11 complex is a regulatory module of the Mediator complex which is itself involved in regulation of basal and activated RNA polymerase II-dependent transcription. The SRB8-11 complex may be involved in the transcriptional repression of a subset of genes regulated by Mediator. It may inhibit the association of the Mediator complex with RNA polymerase II to form the holoenzyme complex. The SRB8-11 complex phosphorylates the C-terminal domain (CTD) of the largest subunit of RNA polymerase II. The chain is Serine/threonine-protein kinase SSN3 (SSN3) from Coccidioides immitis (strain RS) (Valley fever fungus).